We begin with the raw amino-acid sequence, 199 residues long: NADH-ubiquinone oxidoreductase chain 6 (199 aa).

5 helical membrane-spanning segments follow: residues 1–21 (MILF…VIRA), 27–47 (SVLF…LLGL), 49–69 (FFAM…FLFV), 87–107 (YLPV…LMVD), and 150–170 (FFLF…AIVL).

The protein belongs to the complex I subunit 6 family.

It is found in the mitochondrion membrane. The enzyme catalyses a ubiquinone + NADH + 5 H(+)(in) = a ubiquinol + NAD(+) + 4 H(+)(out). In terms of biological role, core subunit of the mitochondrial membrane respiratory chain NADH dehydrogenase (Complex I) that is believed to belong to the minimal assembly required for catalysis. Complex I functions in the transfer of electrons from NADH to the respiratory chain. The immediate electron acceptor for the enzyme is believed to be ubiquinone. The polypeptide is NADH-ubiquinone oxidoreductase chain 6 (ND6) (Marchantia polymorpha (Common liverwort)).